Consider the following 553-residue polypeptide: Tether containing UBX domain for GLUT4 (553 aa).

The residue at position 2 (Ala2) is an N-acetylalanine. Low complexity predominate over residues 182-202 (PGSLGSSASAGQAAASAPLPL). The interval 182–324 (PGSLGSSASA…REPVDREPVV (143 aa)) is disordered. Ser184 carries the phosphoserine modification. Over residues 206–217 (ELSRGDLSRPED) the composition is skewed to basic and acidic residues. The span at 260–280 (RPLTSSSAKLPKSLSSPGGPS) shows a compositional bias: low complexity. A Phosphoserine modification is found at Ser275. Basic and acidic residues predominate over residues 296-324 (EQERERDPQQEQERERPVDREPVDREPVV). Residues 317 to 380 (PVDREPVVCH…LVTKAFREAQ (64 aa)) are interaction with GLUT4. The 77-residue stretch at 386 to 462 (ERYPKVALRV…NLFPAALVHL (77 aa)) folds into the UBX domain. Positions 499–536 (GSPSPLPAPDPAPKSEPAAEEGALVPPEPIPGTAQPVK) are disordered. A phosphoserine mark is found at Ser500 and Ser502. The span at 502 to 512 (SPLPAPDPAPK) shows a compositional bias: pro residues.

In terms of assembly, interacts with GLUT4. Interacts with VCPKMT. Interacts with VCP. As to expression, ubiquitous. Highly expressed in testis, heart, skeletal muscle and pancreas.

Its subcellular location is the endomembrane system. It is found in the endoplasmic reticulum-Golgi intermediate compartment membrane. The protein resides in the cytoplasm. It localises to the nucleus. Tethering protein that sequesters GLUT4-containing vesicles in the cytoplasm in the absence of insulin. Modulates the amount of GLUT4 that is available at the cell surface. Enhances VCP methylation catalyzed by VCPKMT. In Homo sapiens (Human), this protein is Tether containing UBX domain for GLUT4 (ASPSCR1).